Reading from the N-terminus, the 677-residue chain is WD repeat-containing protein 48 (677 aa).

Residue Y28 is modified to Phosphotyrosine. WD repeat units follow at residues 28–67, 73–112, 115–154, 166–205, 208–247, 250–289, 292–334, and 358–397; these read YNRN…QDPY, HHTD…CMST, THKD…ALTA, GNKD…KLMK, GHTD…CIAT, VHDE…IRVL, EEKA…NFRA, and KGGA…KVED. K214 bears the N6-acetyllysine mark. N6-acetyllysine is present on K578. Residues 607–628 are disordered; sequence LDNESQTTSSSNNEKPGEQEKE. Over residues 609-620 the composition is skewed to low complexity; sequence NESQTTSSSNNE. T613 bears the Phosphothreonine mark.

The protein belongs to the WD repeat WDR48 family. As to quaternary structure, interacts with USP46. Interacts with USP1. Interacts with USP12. Component of the USP12-WDR20-WDR48 deubiquitinating complex. Component of the USP12-DMWD-WDR48 deubiquitinating complex. Interacts with PHLPP1. Interacts with RAD51AP1; the interaction is direct and promotes formation of a trimeric complex with RAD51 via RAD51AP1. Interacts with ATAD5; the interaction regulates USP1-mediated PCNA deubiquitination. Interacts with RAD51; the interaction is enhanced under replication stress. Interacts with ITCH; the interaction is more efficient when both USP12 and WDR48/UAF1 are involved and may facilitate recruitment of the USP12 deubiquitinating complex to Notch. (Microbial infection) Interacts with papillomavirus HPV11 E1 protein. In terms of assembly, (Microbial infection) Interacts with Saimiriine herpesvirus TIP protein. As to quaternary structure, (Microbial infection) Interacts with human cytomegalovirus protein UL138. (Microbial infection) Interacts with Epstein-Barr virus protein EBNA3. In terms of tissue distribution, ubiquitous.

It is found in the nucleus. Its subcellular location is the cytoplasm. It localises to the lysosome. The protein localises to the late endosome. In terms of biological role, regulator of deubiquitinating complexes, which acts as a strong activator of USP1, USP12 and USP46. Enhances the USP1-mediated deubiquitination of FANCD2; USP1 being almost inactive by itself. Activates deubiquitination by increasing the catalytic turnover without increasing the affinity of deubiquitinating enzymes for the substrate. Also activates deubiquitinating activity of complexes containing USP12. In complex with USP12, acts as a potential tumor suppressor by positively regulating PHLPP1 stability. Docks at the distal end of the USP12 fingers domain and induces a cascade of structural changes leading to the activation of the enzyme. Together with RAD51AP1, promotes DNA repair by stimulating RAD51-mediated homologous recombination. Binds single-stranded DNA (ssDNA) and double-stranded DNA (dsDNA). DNA-binding is required both for USP1-mediated deubiquitination of FANCD2 and stimulation of RAD51-mediated homologous recombination: both WDR48/UAF1 and RAD51AP1 have coordinated role in DNA-binding during these processes. Together with ATAD5 and by regulating USP1 activity, has a role in PCNA-mediated translesion synthesis (TLS) by deubiquitinating monoubiquitinated PCNA. Together with ATAD5, has a role in recruiting RAD51 to stalled forks during replication stress. (Microbial infection) In case of infection by Herpesvirus saimiri, may play a role in vesicular transport or membrane fusion events necessary for transport to lysosomes. Induces lysosomal vesicle formation via interaction with Herpesvirus saimiri tyrosine kinase-interacting protein (TIP). Subsequently, TIP recruits tyrosine-protein kinase LCK, resulting in down-regulation of T-cell antigen receptor TCR. May play a role in generation of enlarged endosomal vesicles via interaction with TIP. In case of infection by papillomavirus HPV11, promotes the maintenance of the viral genome via its interaction with HPV11 helicase E1. This is WD repeat-containing protein 48 from Homo sapiens (Human).